We begin with the raw amino-acid sequence, 81 residues long: N.vectensis toxin 4 (81 aa).

Positions 1–20 (MRSSWMFVICFAMLILYTNG) are cleaved as a signal peptide. 3 cysteine pairs are disulfide-bonded: Cys-46–Cys-75, Cys-48–Cys-70, and Cys-63–Cys-76.

As to expression, expressed in ectodermal gland cells. In adult female tissues, highly transcribed in mesenteries (gametes-producing tissue) and slightly transcribed in tentacles, pharynx and physa.

Its function is as follows. Has toxic effects on zebrafish larvae. It causes contractile paralysis and twitching of the tail within 30 minutes, followed by death within 40 minutes. Does not show any toxicity when injected into arthropods (cherry shrimps or grass shrimps). The polypeptide is N.vectensis toxin 4 (Nematostella vectensis (Starlet sea anemone)).